Here is a 448-residue protein sequence, read N- to C-terminus: Histidinol dehydrogenase (448 aa).

NAD(+)-binding residues include tyrosine 136, glutamine 197, and asparagine 220. Substrate contacts are provided by serine 243, glutamine 265, and histidine 268. Zn(2+) is bound by residues glutamine 265 and histidine 268. Residues glutamate 333 and histidine 334 each act as proton acceptor in the active site. Substrate contacts are provided by histidine 334, aspartate 367, glutamate 421, and histidine 426. Aspartate 367 is a Zn(2+) binding site. Histidine 426 is a Zn(2+) binding site.

The protein belongs to the histidinol dehydrogenase family. Zn(2+) serves as cofactor.

It carries out the reaction L-histidinol + 2 NAD(+) + H2O = L-histidine + 2 NADH + 3 H(+). The protein operates within amino-acid biosynthesis; L-histidine biosynthesis; L-histidine from 5-phospho-alpha-D-ribose 1-diphosphate: step 9/9. Functionally, catalyzes the sequential NAD-dependent oxidations of L-histidinol to L-histidinaldehyde and then to L-histidine. In Pseudomonas savastanoi pv. phaseolicola (strain 1448A / Race 6) (Pseudomonas syringae pv. phaseolicola (strain 1448A / Race 6)), this protein is Histidinol dehydrogenase.